A 546-amino-acid chain; its full sequence is Probable protein kinase UbiB (546 aa).

The 379-residue stretch at 124–502 (DFDIQPLASA…HVRQSQSRYL (379 aa)) folds into the Protein kinase domain. ATP-binding positions include 130–138 (LASASIAQV) and K153. The active-site Proton acceptor is D288. 2 consecutive transmembrane segments (helical) span residues 501-521 (YLLG…VNRP) and 522-542 (EWGL…LVGW).

It belongs to the ABC1 family. UbiB subfamily.

It is found in the cell inner membrane. Its pathway is cofactor biosynthesis; ubiquinone biosynthesis [regulation]. In terms of biological role, is probably a protein kinase regulator of UbiI activity which is involved in aerobic coenzyme Q (ubiquinone) biosynthesis. This chain is Probable protein kinase UbiB, found in Salmonella enteritidis PT4 (strain P125109).